We begin with the raw amino-acid sequence, 224 residues long: Germin-like protein 1-2 (224 aa).

An N-terminal signal peptide occupies residues 1–29 (MASSRSVVLRVLVAVAVVAAAGAPRLAVA). Residues Cys-38 and Cys-53 are joined by a disulfide bond. Residues 67-215 (DAIVQAPSTS…TFLMGEDEVG (149 aa)) form the Cupin type-1 domain. The N-linked (GlcNAc...) asparagine glycan is linked to Asn-82. His-115, His-117, Glu-122, and His-161 together coordinate Mn(2+). Asn-170 carries an N-linked (GlcNAc...) asparagine glycan.

It belongs to the germin family. As to quaternary structure, oligomer (believed to be a pentamer but probably hexamer).

The protein resides in the secreted. The protein localises to the extracellular space. It is found in the apoplast. May play a role in plant defense. Probably has no oxalate oxidase activity even if the active site is conserved. This is Germin-like protein 1-2 from Oryza sativa subsp. japonica (Rice).